A 146-amino-acid polypeptide reads, in one-letter code: Large ribosomal subunit protein uL15 (146 aa).

The tract at residues Met-1–His-58 is disordered. Gly residues-rich tracts occupy residues Gly-22 to Ala-31 and Ser-42 to Gly-52.

This sequence belongs to the universal ribosomal protein uL15 family. As to quaternary structure, part of the 50S ribosomal subunit.

Functionally, binds to the 23S rRNA. The chain is Large ribosomal subunit protein uL15 from Desulfatibacillum aliphaticivorans.